The following is a 282-amino-acid chain: UPF0294 protein VIBHAR_03217 (282 aa).

It belongs to the UPF0294 family.

It is found in the cytoplasm. This is UPF0294 protein VIBHAR_03217 from Vibrio campbellii (strain ATCC BAA-1116).